A 248-amino-acid chain; its full sequence is MAGLNSLEAVKRKIQALQQQADEAEDRAQGLQRELDGERERREKAEGDVAALNRRIQLVEEELDRAQERLATALQKLEEAEKAADESERGMKVIENRAMKDEEKMEIQEMQLKEAKHIAEEADRKYEEVARKLVILEGELERAEERAEVSELKCGDLEEELKNVTNNLKSLEAASEKYSEKEDKYEEEIKLLSDKLKEAETRAEFAERTVAKLEKTIDDLEEKLAQAKEENVGLHQTLDQTLNELNCI.

The residue at position 2 (A2) is an N-acetylalanine. Positions 2–248 form a coiled coil; sequence AGLNSLEAVK…DQTLNELNCI (247 aa). At S6 the chain carries Phosphoserine. Residues 15–47 form a disordered region; the sequence is QALQQQADEAEDRAQGLQRELDGERERREKAEG. Residues 33–47 are compositionally biased toward basic and acidic residues; the sequence is RELDGERERREKAEG. N6-acetyllysine occurs at positions 177 and 215. The residue at position 216 (T216) is a Phosphothreonine.

Belongs to the tropomyosin family. As to quaternary structure, homodimer. Heterodimer of an alpha (TPM1, TPM3 or TPM4) and a beta (TPM2) chain. As to expression, detected in cardiac tissue and platelets, the form found in cardiac tissue is a higher molecular weight than the form found in platelets. Expressed at higher levels in the platelets of hypertensive patients with cardiac hypertrophy than in the platelets of hypertensive patients without cardiac hypertrophy (at protein level).

Its subcellular location is the cytoplasm. The protein resides in the cytoskeleton. In terms of biological role, binds to actin filaments in muscle and non-muscle cells. Plays a central role, in association with the troponin complex, in the calcium dependent regulation of vertebrate striated muscle contraction. Smooth muscle contraction is regulated by interaction with caldesmon. In non-muscle cells is implicated in stabilizing cytoskeleton actin filaments. Binds calcium. Plays a role in platelet biogenesis. This Homo sapiens (Human) protein is Tropomyosin alpha-4 chain (TPM4).